We begin with the raw amino-acid sequence, 187 residues long: Flavin prenyltransferase UbiX (187 aa).

FMN contacts are provided by residues 9–11 (GAS), Ser-34, and Arg-123. Residues Tyr-153 and Lys-169 each contribute to the dimethylallyl phosphate site.

It belongs to the UbiX/PAD1 family.

The catalysed reaction is dimethylallyl phosphate + FMNH2 = prenylated FMNH2 + phosphate. Functionally, flavin prenyltransferase that catalyzes the synthesis of the prenylated FMN cofactor (prenyl-FMN) for 4-hydroxy-3-polyprenylbenzoic acid decarboxylase UbiD. The prenyltransferase is metal-independent and links a dimethylallyl moiety from dimethylallyl monophosphate (DMAP) to the flavin N5 and C6 atoms of FMN. This chain is Flavin prenyltransferase UbiX, found in Helicobacter pylori (strain ATCC 700392 / 26695) (Campylobacter pylori).